Here is a 247-residue protein sequence, read N- to C-terminus: MTDNTSAPMYTLRGLQLIGWRDMQHALDFLCAADGQIKSGTLVAINAEKMLAIEDNAEVKGLIEAAEFKYADGISVVRSIRKKYPQARVSRVAGADLWEALMARAGAANTPVFLIGGKPEVLSQTEQKLRAQWNVNIVGSQDGYFKPEDRQALFERVRDSGAKIVTVAMGSPRQEILMRDCRMICPDALYMGVGGTYDVFTGHVKRAPKVWQNLGLEWLYRLLSQPSRITRQIKLLRYLAWHYTGKM.

Belongs to the glycosyltransferase 26 family.

The catalysed reaction is UDP-N-acetyl-alpha-D-mannosaminouronate + N-acetyl-alpha-D-glucosaminyl-di-trans,octa-cis-undecaprenyl diphosphate = beta-D-ManNAcA-(1-&gt;4)-alpha-D-GlcNAc-di-trans,octa-cis-undecaprenyl diphosphate + UDP + H(+). Its pathway is bacterial outer membrane biogenesis; enterobacterial common antigen biosynthesis. Functionally, catalyzes the synthesis of Und-PP-GlcNAc-ManNAcA (Lipid II), the second lipid-linked intermediate involved in enterobacterial common antigen (ECA) synthesis. The protein is UDP-N-acetyl-D-mannosaminuronic acid transferase of Enterobacter sp. (strain 638).